A 558-amino-acid chain; its full sequence is Nucleoprotein (558 aa).

Positions M54–I237 are binding site for the cap structure m7GTP. Mg(2+) is bound by residues D382 and E384. The Mn(2+) site is built by D382 and E384. 4 residues coordinate Zn(2+): E392, C499, H502, and C518. D522 is a binding site for Mg(2+). Position 522 (D522) interacts with Mn(2+).

The protein belongs to the arenaviridae nucleocapsid protein family. Homomultimerizes to form the nucleocapsid. Binds to viral genomic RNA. Interacts with glycoprotein G2. Interacts with protein Z; this interaction probably directs the encapsidated genome to budding sites. Interacts with protein L; this interaction does not interfere with Z-L interaction. Interacts with host IKBKE (via Protein kinase domain); the interaction inhibits IKBKE kinase activity.

The protein resides in the virion. It localises to the host cytoplasm. Functionally, encapsidates the genome, protecting it from nucleases. The encapsidated genomic RNA is termed the nucleocapsid (NC). Serves as template for viral transcription and replication. The increased presence of protein N in host cell does not seem to trigger the switch from transcription to replication as observed in other negative strain RNA viruses. Through the interaction with host IKBKE, strongly inhibits the phosphorylation and nuclear translocation of host IRF3, a protein involved in interferon activation pathway, leading to the inhibition of interferon-beta and IRF3-dependent promoters activation. Also encodes a functional 3'-5' exoribonuclease that degrades preferentially dsRNA substrates and thereby participates in the suppression of interferon induction. In Lymphocytic choriomeningitis virus (strain Armstrong) (LCMV), this protein is Nucleoprotein.